A 749-amino-acid polypeptide reads, in one-letter code: MGRAGAAAVIPGLALLWAVGLGSAAPSPPRLRLSFQELQAWHGLQTFSLERTCCYQALLVDEERGRLFVGAENHVASLNLDNISKRAKKLAWPAPVEWREECNWAGKDIGTECMNFVKLLHAYNRTHLLACGTGAFHPTCAFVEVGHRAEEPVLRLDPGRIEDGKGKSPYDPRHRAASVLVGEELYSGVAADLMGRDFTIFRSLGQRPSLRTEPHDSRWLNEPKFVKVFWIPESENPDDDKIYFFFRETAVEAAPALGRLSVSRVGQICRNDVGGQRSLVNKWTTFLKARLVCSVPGVEGDTHFDQLQDVFLLSSRDHRTPLLYAVFSTSSSIFQGSAVCVYSMNDVRRAFLGPFAHKEGPMHQWVSYQGRVPYPRPGMCPSKTFGTFSSTKDFPDDVIQFARNHPLMYNSVLPTGGRPLFLQVGANYTFTQIAADRVAAADGHYDVLFIGTDVGTVLKVISVPKGSRPSAEGLLLEELHVFEDSAAVTSMQISSKRHQLYVASRSAVAQIALHRCAAHGRVCTECCLARDPYCAWDGVACTRFQPSAKRRFRRQDVRNGDPSTLCSGDSSRPALLEHKVFGVEGSSAFLECEPRSLQARVEWTFQRAGVTAHTQVLAEERTERTARGLLLRRLRRRDSGVYLCAAVEQGFTQPLRRLSLHVLSATQAERLARAEEAAPAAPPGPKLWYRDFLQLVEPGGGGSANSLRMCRPQPALQSLPLESRRKGRNRRTHAPEPRAERGPRSATHW.

The first 24 residues, 1–24 (MGRAGAAAVIPGLALLWAVGLGSA), serve as a signal peptide directing secretion. Residues 30-513 (RLRLSFQELQ…SRSAVAQIAL (484 aa)) enclose the Sema domain. Residue N82 is glycosylated (N-linked (GlcNAc...) asparagine). Residues C102 and C113 are joined by a disulfide bond. N-linked (GlcNAc...) asparagine glycosylation is present at N124. 3 disulfides stabilise this stretch: C131/C140, C269/C380, and C293/C340. A glycan (N-linked (GlcNAc...) asparagine) is linked at N427. Intrachain disulfides connect C516–C534 and C644–C710. The Ig-like C2-type domain occupies 573–659 (PALLEHKVFG…GFTQPLRRLS (87 aa)). A disordered region spans residues 702-749 (GSANSLRMCRPQPALQSLPLESRRKGRNRRTHAPEPRAERGPRSATHW). Over residues 733 to 743 (HAPEPRAERGP) the composition is skewed to basic and acidic residues.

It belongs to the semaphorin family. As to expression, expressed abundantly but differentially in a variety of neural and nonneural tissues.

It localises to the secreted. The protein localises to the endoplasmic reticulum. Inhibits axonal extension by providing local signals to specify territories inaccessible for growing axons. This Homo sapiens (Human) protein is Semaphorin-3B (SEMA3B).